An 851-amino-acid chain; its full sequence is DEAD-box ATP-dependent RNA helicase 29 (851 aa).

A disordered region spans residues 1-49; that stretch reads MARLNPSKPSSRGGKPRSSSADAMAEHKPPPGRPKREGEGASKKKAKSG. A compositionally biased stretch (low complexity) spans 7–20; sequence SKPSSRGGKPRSSS. The segment covering 24-42 has biased composition (basic and acidic residues); sequence MAEHKPPPGRPKREGEGAS. Positions 49–77 match the Q motif motif; the sequence is GGFESMGLCEEVYRGVRHKGYRVPTPIQR. A Helicase ATP-binding domain is found at 80–253; sequence MPLILAGHDI…KAGLRDPQIV (174 aa). Residue 93-100 participates in ATP binding; the sequence is ARTGSGKT. Residues 201–204 carry the DEAD box motif; it reads DEAD. In terms of domain architecture, Helicase C-terminal spans 277-426; the sequence is KLAALLYLVR…PAPTEEELLK (150 aa). The disordered stretch occupies residues 702–851; that stretch reads KWQQKTHRSI…KGKMKGKGTR (150 aa). Basic residues predominate over residues 733-746; that stretch reads RGNRKHTAAGRGRR. Basic and acidic residues-rich tracts occupy residues 773-787 and 796-825; these read DIAR…ESKF and RHDG…DGNG. Residues 841–851 show a composition bias toward basic residues; that stretch reads GKGKMKGKGTR.

Belongs to the DEAD box helicase family. DDX54/DBP10 subfamily.

The catalysed reaction is ATP + H2O = ADP + phosphate + H(+). The sequence is that of DEAD-box ATP-dependent RNA helicase 29 from Oryza sativa subsp. indica (Rice).